The sequence spans 482 residues: Ribulose bisphosphate carboxylase large chain (482 aa).

Positions Met1–Ser2 are excised as a propeptide. Pro3 carries the N-acetylproline modification. Lys14 is modified (N6,N6,N6-trimethyllysine). 2 residues coordinate substrate: Asn123 and Thr173. Lys175 serves as the catalytic Proton acceptor. Residue Lys177 coordinates substrate. Mg(2+) is bound by residues Lys201, Asp203, and Glu204. Lys201 carries the N6-carboxylysine modification. Catalysis depends on His294, which acts as the Proton acceptor. The substrate site is built by Arg295, His327, and Ser379.

Belongs to the RuBisCO large chain family. Type I subfamily. As to quaternary structure, heterohexadecamer of 8 large chains and 8 small chains; disulfide-linked. The disulfide link is formed within the large subunit homodimers. Mg(2+) serves as cofactor. The disulfide bond which can form in the large chain dimeric partners within the hexadecamer appears to be associated with oxidative stress and protein turnover.

It is found in the plastid. The protein resides in the chloroplast. The catalysed reaction is 2 (2R)-3-phosphoglycerate + 2 H(+) = D-ribulose 1,5-bisphosphate + CO2 + H2O. The enzyme catalyses D-ribulose 1,5-bisphosphate + O2 = 2-phosphoglycolate + (2R)-3-phosphoglycerate + 2 H(+). RuBisCO catalyzes two reactions: the carboxylation of D-ribulose 1,5-bisphosphate, the primary event in carbon dioxide fixation, as well as the oxidative fragmentation of the pentose substrate in the photorespiration process. Both reactions occur simultaneously and in competition at the same active site. This Stegnosperma halimifolium protein is Ribulose bisphosphate carboxylase large chain.